Reading from the N-terminus, the 877-residue chain is MGDTEIVPLRVQNVLDSEIIRLNLWSMKFNATSFKLEGFVRNEEGTMMQKVCSEFICRRFTSTLLFDVSGRFFDLVGQIDREYQQKMGMPSRIIDEFSNGIPENWADLIYSCMSANQRSALRPIQQAPKEPIRTRTEPIVTLADETELTGGCQKNSENEKERNRREREEQQTKERERRLEEEKQRRDAEAEAERRRKEEEELEEANYTLRAPKSQNGEPITPIRFTRGHDNGGAKKVFIFEQTPVRKQGPIASSTPQQKQRLADGANNQIPPTQKSQDSVQAVQPPPPRPAARNAQFASDADLFAVPKAPPSKSVRNLAASNVDIFADVDSVLDTFHFESTPGRVRKPGRRNVSSPSPEPRHRSSSRDGYEQSRYSQRYEHDNSRWSRHNATYRRHEDESRMSRKRSIVRDDFEYSRRHDDGARRRDYYDADIQGDSKRYRGRDASSSSGRSVRFEEEHRRHGDEYRDPRGPRDYNDYGRRRNHANSRSGEDEEKLNAIVRREKELRNRLQKSQKASSSSYRHRSNSSDAEESLNEWDIENQELLDNSMMFGDGIPKRSNARKDKFVKKQATRSKPANSTKSPAQARKKKRASLEDNRDLNDSIACNRPRRSCVTPVAKKITWRKQDLDRLKRVIALKKPSASDADWTEVLRLLAKEGVVEPEVVRQIAITRLKWVEPEQNEEVLKQVEEVEQKRRRGAVARVKENVKMHEELREGGNHRAEDLQSGVESMEDYQPEDVAADQSLLALRTPIVTKKRGGTRASIMPKPVEDSPMSRGNNSTFNSPRLEQTKAKDIETNFKYVQHLSMMQARPSSRLKKSSSMNNSTYRGNKNTSISLEKGTQKALKIINRGTTIHEDDENEDNDDDDDMREEDTSIY.

An SANTA domain is found at 20 to 107 (IRLNLWSMKF…SNGIPENWAD (88 aa)). Disordered regions lie at residues 122–315 (RPIQ…SKSV), 338–535 (FEST…ESLN), and 549–604 (MMFG…NDSI). Residues 153–211 (QKNSENEKERNRREREEQQTKERERRLEEEKQRRDAEAEAERRRKEEEELEEANYTLRA) adopt a coiled-coil conformation. Residues 156-199 (SENEKERNRREREEQQTKERERRLEEEKQRRDAEAEAERRRKEE) show a composition bias toward basic and acidic residues. A compositionally biased stretch (polar residues) spans 251-279 (IASSTPQQKQRLADGANNQIPPTQKSQDS). Composition is skewed to basic and acidic residues over residues 359–385 (EPRH…DNSR), 394–444 (RRHE…RGRD), and 453–480 (VRFE…DYGR). Residues 491–549 (EDEEKLNAIVRREKELRNRLQKSQKASSSSYRHRSNSSDAEESLNEWDIENQELLDNSM) are a coiled coil. A compositionally biased stretch (low complexity) spans 511–520 (QKSQKASSSS). Positions 573–583 (RSKPANSTKSP) are enriched in polar residues. Residues 592 to 601 (ASLEDNRDLN) are compositionally biased toward basic and acidic residues. The 62-residue stretch at 617–678 (VAKKITWRKQ…AITRLKWVEP (62 aa)) folds into the Myb-like domain. 2 disordered regions span residues 757–785 (RGGT…FNSP) and 808–877 (MQAR…TSIY). Composition is skewed to polar residues over residues 775-785 (SRGNNSTFNSP) and 819-836 (SSSM…TSIS). Acidic residues predominate over residues 856–871 (EDDENEDNDDDDDMRE).

This sequence belongs to the KNL2 family. Interacts with hcp-3.

It is found in the nucleus. It localises to the chromosome. Its subcellular location is the centromere. The protein resides in the kinetochore. Its function is as follows. Required for the recruitment of hcp-3, hcp-4, knl-1, bub-1 and lin-53 to kinetochores, kinetochore assembly, chromosome condensation and chromosome segregation in meiosis and mitosis. This chain is Kinetochore null protein 2, found in Caenorhabditis elegans.